Consider the following 518-residue polypeptide: MSRFQSLLSFVLVSLAAVANAAIGPVADLTLTNAAVSPDGFSREAVVVNGITPAPLIAGQKGDRFQLNVIDNLTNHTMLKTTSIHWHGFFQHGTNWADGVSFVNQCPIASGHSFLYDFQVPDQAGTFWYHSHLSTQYCDGLRGPFVVYDPNDPQASLYDIDNDDTVITLADWYHVAAKLGPRFPLGADATLINGLGRSPGTTTADLAVIKVTQGKRYRFRLVSLSCDPNHTFSIDGHTMTVIEADSVNTQPLEVDSIQIFAAQRYSFVLDASQPVDNYWIRANPAFGNVGFAGGINSAILRYDGAPEVEPTTTQTTSTKPLNEADLHPLTPMPVPGRPEAGGVDKPLNMVFNFNGTNFFINNHSFVPPSVPVLLQILSGAQAAQDLVPDGSVYVLPSNSSIEISFPATANAPGTPHPFHLHGHTFAVVRSAGSSEYNYDNPIFRDVVSTGQPGDNVTIRFQTNNPGPWFLHCHIDFHLEAGFAVVLAEDTPDTAAVNPVPQSWSDLCPIYDALDPSDL.

A signal peptide spans 1-21 (MSRFQSLLSFVLVSLAAVANA). Plastocyanin-like domains follow at residues 23–148 (IGPV…FVVY) and 160–302 (IDND…ILRY). 2 N-linked (GlcNAc...) asparagine glycosylation sites follow: Asn72 and Asn75. Residues His85, His87, His130, and His132 each contribute to the Cu cation site. Cystine bridges form between Cys106–Cys507 and Cys138–Cys226. N-linked (GlcNAc...) asparagine glycosylation occurs at Asn229. Residues 308-330 (VEPTTTQTTSTKPLNEADLHPLT) are disordered. N-linked (GlcNAc...) asparagine glycans are attached at residues Asn354, Asn362, and Asn398. In terms of domain architecture, Plastocyanin-like 3 spans 369-489 (SVPVLLQILS…AGFAVVLAED (121 aa)). Cu cation contacts are provided by His416, His419, His421, His471, Cys472, His473, and His477.

Belongs to the multicopper oxidase family. Requires Cu cation as cofactor.

Its subcellular location is the secreted. It catalyses the reaction 4 hydroquinone + O2 = 4 benzosemiquinone + 2 H2O. In terms of biological role, lignin degradation and detoxification of lignin-derived products. Cleaves the C-C and C-O bonds of some phenolic lignin model compounds (such as O- and P-quinols, aminophenols and phenylenediamine). May also be involved in synthesis of phenoxazinone pigments. The protein is Laccase (LCC3-1) of Pycnoporus cinnabarinus (Cinnabar-red polypore).